A 556-amino-acid polypeptide reads, in one-letter code: Probable Xaa-Pro aminopeptidase SS1G_06948 (556 aa).

Mn(2+) contacts are provided by Asp305, Asp316, Glu460, and Glu501.

The protein belongs to the peptidase M24B family. Mn(2+) is required as a cofactor.

It carries out the reaction Release of any N-terminal amino acid, including proline, that is linked to proline, even from a dipeptide or tripeptide.. In terms of biological role, catalyzes the removal of a penultimate prolyl residue from the N-termini of peptides. This is Probable Xaa-Pro aminopeptidase SS1G_06948 from Sclerotinia sclerotiorum (strain ATCC 18683 / 1980 / Ss-1) (White mold).